A 449-amino-acid polypeptide reads, in one-letter code: Myb family transcription factor PHL6 (449 aa).

Residues 49–72 (PFIRSQSPDSPGQLWPKNSSQSTF) form a disordered region. In terms of domain architecture, HTH myb-type spans 238-298 (ANQKSRMRWT…HLQKYRLAKY (61 aa)). Positions 269-294 (PKAVKKLMNVEGLTIYHVKSHLQKYR) form a DNA-binding region, H-T-H motif. Positions 301–327 (EKKEEKRTDNSEEKKLALSKSEADEKK) are disordered. The tract at residues 334 to 354 (TEALRMQMEVQKQLHEQLEVQ) is coiled coil. The LHEQLE signature appears at 347–352 (LHEQLE). Residues 376–449 (RKTGRWISSS…NIAESEDPKR (74 aa)) form a disordered region. Residues 381-410 (WISSSSQTVLSPSDDSIPDSQNMSKTKASS) are compositionally biased toward polar residues.

The protein belongs to the MYB-CC family.

It is found in the nucleus. In Arabidopsis thaliana (Mouse-ear cress), this protein is Myb family transcription factor PHL6.